Reading from the N-terminus, the 161-residue chain is SsrA-binding protein (161 aa).

This sequence belongs to the SmpB family.

It is found in the cytoplasm. Its function is as follows. Required for rescue of stalled ribosomes mediated by trans-translation. Binds to transfer-messenger RNA (tmRNA), required for stable association of tmRNA with ribosomes. tmRNA and SmpB together mimic tRNA shape, replacing the anticodon stem-loop with SmpB. tmRNA is encoded by the ssrA gene; the 2 termini fold to resemble tRNA(Ala) and it encodes a 'tag peptide', a short internal open reading frame. During trans-translation Ala-aminoacylated tmRNA acts like a tRNA, entering the A-site of stalled ribosomes, displacing the stalled mRNA. The ribosome then switches to translate the ORF on the tmRNA; the nascent peptide is terminated with the 'tag peptide' encoded by the tmRNA and targeted for degradation. The ribosome is freed to recommence translation, which seems to be the essential function of trans-translation. This Vibrio vulnificus (strain YJ016) protein is SsrA-binding protein.